A 402-amino-acid polypeptide reads, in one-letter code: UPF0261 protein BP1203 (402 aa).

The protein belongs to the UPF0261 family.

This chain is UPF0261 protein BP1203, found in Bordetella pertussis (strain Tohama I / ATCC BAA-589 / NCTC 13251).